Here is a 185-residue protein sequence, read N- to C-terminus: GTP cyclohydrolase 1 (185 aa).

C75, H78, and C146 together coordinate Zn(2+).

This sequence belongs to the GTP cyclohydrolase I family. As to quaternary structure, toroid-shaped homodecamer, composed of two pentamers of five dimers.

The catalysed reaction is GTP + H2O = 7,8-dihydroneopterin 3'-triphosphate + formate + H(+). Its pathway is cofactor biosynthesis; 7,8-dihydroneopterin triphosphate biosynthesis; 7,8-dihydroneopterin triphosphate from GTP: step 1/1. This Methylococcus capsulatus (strain ATCC 33009 / NCIMB 11132 / Bath) protein is GTP cyclohydrolase 1.